Here is a 263-residue protein sequence, read N- to C-terminus: Phosphate import ATP-binding protein PstB (263 aa).

The 242-residue stretch at 17–258 (ISVKNLDFFY…PKRKETEDYI (242 aa)) folds into the ABC transporter domain. ATP is bound at residue 49–56 (GPSGCGKS).

This sequence belongs to the ABC transporter superfamily. Phosphate importer (TC 3.A.1.7) family. The complex is composed of two ATP-binding proteins (PstB), two transmembrane proteins (PstC and PstA) and a solute-binding protein (PstS).

The protein resides in the cell inner membrane. It carries out the reaction phosphate(out) + ATP + H2O = ADP + 2 phosphate(in) + H(+). Its function is as follows. Part of the ABC transporter complex PstSACB involved in phosphate import. Responsible for energy coupling to the transport system. The polypeptide is Phosphate import ATP-binding protein PstB (Polaromonas sp. (strain JS666 / ATCC BAA-500)).